Reading from the N-terminus, the 415-residue chain is Dynein assembly factor with WD repeat domains 1 (415 aa).

WD repeat units follow at residues 90–129, 132–174, 175–214, 217–256, 259–298, 301–340, 343–384, and 386–415; these read AHILPLTNVAFNKSGSSFITGSYDRTCKVWDTASGEELHT, GHRN…HTFR, GHTAEIVCLVFNPQSTLIATGSMDTTAKLWDIQSGEEALT, GHAAEIISLSFNTTGDRLITGSFDHTVSVWEIPSGRRIHT, GHRGEISSAQFNWDCSLIATASMDKSCKLWDSLNGKCVAT, GHDDEVLDVTFDSTGQLVATASADGTARVYSASSRKCLAK, GHEG…QVLK, and HTDEIFSCAFNYEGNTIITGSKDNTCRIWR.

This sequence belongs to the WD repeat WDR69 family.

The protein localises to the cytoplasm. The protein resides in the cytoskeleton. It is found in the flagellum basal body. It localises to the flagellum axoneme. Functionally, required for axonemal dynein assembly and ciliary motility in ciliated organs, including Kupffer's vesicle, during embryogenesis. Facilitates the onset of robust cilia motility during development. The polypeptide is Dynein assembly factor with WD repeat domains 1 (daw1) (Xenopus laevis (African clawed frog)).